Reading from the N-terminus, the 749-residue chain is 1,4-alpha-glucan branching enzyme GlgB (749 aa).

Asp427 functions as the Nucleophile in the catalytic mechanism. Glu480 serves as the catalytic Proton donor.

This sequence belongs to the glycosyl hydrolase 13 family. GlgB subfamily. In terms of assembly, monomer.

The catalysed reaction is Transfers a segment of a (1-&gt;4)-alpha-D-glucan chain to a primary hydroxy group in a similar glucan chain.. It participates in glycan biosynthesis; glycogen biosynthesis. Its function is as follows. Catalyzes the formation of the alpha-1,6-glucosidic linkages in glycogen by scission of a 1,4-alpha-linked oligosaccharide from growing alpha-1,4-glucan chains and the subsequent attachment of the oligosaccharide to the alpha-1,6 position. In Thermobifida fusca (strain YX), this protein is 1,4-alpha-glucan branching enzyme GlgB.